Here is a 64-residue protein sequence, read N- to C-terminus: Beta-defensin 1 (64 aa).

A signal peptide spans 1-20 (MRLHRLLLVFLLMVLLPVPG). Residues 21-23 (LLK) constitute a propeptide that is removed on maturation. Intrachain disulfides connect Cys-31–Cys-60, Cys-38–Cys-53, and Cys-43–Cys-61.

Belongs to the beta-defensin family. Monomer. Homodimer.

It is found in the secreted. It localises to the membrane. Has bactericidal activity. May act as a ligand for C-C chemokine receptor CCR6. Positively regulates the sperm motility and bactericidal activity in a CCR6-dependent manner. Binds to CCR6 and triggers Ca2+ mobilization in the sperm which is important for its motility. The sequence is that of Beta-defensin 1 (DEFB1) from Sus scrofa (Pig).